Here is a 343-residue protein sequence, read N- to C-terminus: Heat-inducible transcription repressor HrcA (343 aa).

This sequence belongs to the HrcA family.

Negative regulator of class I heat shock genes (grpE-dnaK-dnaJ and groELS operons). Prevents heat-shock induction of these operons. This chain is Heat-inducible transcription repressor HrcA, found in Mycolicibacterium smegmatis (strain ATCC 700084 / mc(2)155) (Mycobacterium smegmatis).